Reading from the N-terminus, the 485-residue chain is Aspartyl/glutamyl-tRNA(Asn/Gln) amidotransferase subunit B (485 aa).

Belongs to the GatB/GatE family. GatB subfamily. In terms of assembly, heterotrimer of A, B and C subunits.

It catalyses the reaction L-glutamyl-tRNA(Gln) + L-glutamine + ATP + H2O = L-glutaminyl-tRNA(Gln) + L-glutamate + ADP + phosphate + H(+). The enzyme catalyses L-aspartyl-tRNA(Asn) + L-glutamine + ATP + H2O = L-asparaginyl-tRNA(Asn) + L-glutamate + ADP + phosphate + 2 H(+). Its function is as follows. Allows the formation of correctly charged Asn-tRNA(Asn) or Gln-tRNA(Gln) through the transamidation of misacylated Asp-tRNA(Asn) or Glu-tRNA(Gln) in organisms which lack either or both of asparaginyl-tRNA or glutaminyl-tRNA synthetases. The reaction takes place in the presence of glutamine and ATP through an activated phospho-Asp-tRNA(Asn) or phospho-Glu-tRNA(Gln). The sequence is that of Aspartyl/glutamyl-tRNA(Asn/Gln) amidotransferase subunit B from Cupriavidus pinatubonensis (strain JMP 134 / LMG 1197) (Cupriavidus necator (strain JMP 134)).